The primary structure comprises 1770 residues: Transposon Ty2-DR2 Gag-Pol polyprotein (1770 aa).

Composition is skewed to polar residues over residues 1 to 39 (MESQ…SASN) and 49 to 60 (KVNSQEETTPGT). Disordered regions lie at residues 1–89 (MESQ…QQHG) and 360–449 (HSEY…SNDE). An RNA-binding region spans residues 295-397 (ENNINVSDRL…SSKPRAAKAH (103 aa)). The segment covering 369–381 (TSPNTTNTKVTTR) has biased composition (low complexity). Composition is skewed to polar residues over residues 399–408 (IATSSKFSRV) and 415–435 (ESTV…GQQQ). Catalysis depends on Asp-457, which acts as the For protease activity; shared with dimeric partner. Residues 579–636 (NVNKSKSVNKYPYPLIHRMLGHANFRSIQKSLKKNAVTYLKESDIEWSNASTYQCPDC) are integrase-type zinc finger-like. One can recognise an Integrase catalytic domain in the interval 656–831 (ESYEPFQYLH…AGLDITTILP (176 aa)). Mg(2+) contacts are provided by Asp-667 and Asp-732. Disordered regions lie at residues 1005–1038 (GGTI…MIDL), 1059–1135 (TEEP…KSSK), and 1171–1222 (SRQT…LEPP). 2 stretches are compositionally biased toward polar residues: residues 1009–1024 (ESDT…FTAR) and 1065–1082 (QRNS…STPS). The Bipartite nuclear localization signal signature appears at 1193–1227 (KKRSLEDNETEIEVSRDTWNNKNMRSLEPPRSKKR). Positions 1353–1491 (NDYYITQLDI…DILGLEIKYQ (139 aa)) constitute a Reverse transcriptase Ty1/copia-type domain. Positions 1361, 1442, 1443, 1625, 1667, and 1700 each coordinate Mg(2+). The region spanning 1625–1767 (DASYGNQPYY…IKTFKLLTNK (143 aa)) is the RNase H Ty1/copia-type domain.

As to quaternary structure, the capsid protein forms a homotrimer, from which the VLPs are assembled. The protease is a homodimer, whose active site consists of two apposed aspartic acid residues. Initially, virus-like particles (VLPs) are composed of the structural unprocessed proteins Gag and Gag-Pol, and also contain the host initiator methionine tRNA (tRNA(i)-Met) which serves as a primer for minus-strand DNA synthesis, and a dimer of genomic Ty RNA. Processing of the polyproteins occurs within the particle and proceeds by an ordered pathway, called maturation. First, the protease (PR) is released by autocatalytic cleavage of the Gag-Pol polyprotein, and this cleavage is a prerequisite for subsequent processing at the remaining sites to release the mature structural and catalytic proteins. Maturation takes place prior to the RT reaction and is required to produce transposition-competent VLPs.

It is found in the cytoplasm. The protein localises to the nucleus. The enzyme catalyses DNA(n) + a 2'-deoxyribonucleoside 5'-triphosphate = DNA(n+1) + diphosphate. It carries out the reaction Endonucleolytic cleavage to 5'-phosphomonoester.. In terms of biological role, capsid protein (CA) is the structural component of the virus-like particle (VLP), forming the shell that encapsulates the retrotransposons dimeric RNA genome. The particles are assembled from trimer-clustered units and there are holes in the capsid shells that allow for the diffusion of macromolecules. CA also has nucleocapsid-like chaperone activity, promoting primer tRNA(i)-Met annealing to the multipartite primer-binding site (PBS), dimerization of Ty2 RNA and initiation of reverse transcription. The aspartyl protease (PR) mediates the proteolytic cleavages of the Gag and Gag-Pol polyproteins after assembly of the VLP. Functionally, reverse transcriptase/ribonuclease H (RT) is a multifunctional enzyme that catalyzes the conversion of the retro-elements RNA genome into dsDNA within the VLP. The enzyme displays a DNA polymerase activity that can copy either DNA or RNA templates, and a ribonuclease H (RNase H) activity that cleaves the RNA strand of RNA-DNA heteroduplexes during plus-strand synthesis and hydrolyzes RNA primers. The conversion leads to a linear dsDNA copy of the retrotransposon that includes long terminal repeats (LTRs) at both ends. Its function is as follows. Integrase (IN) targets the VLP to the nucleus, where a subparticle preintegration complex (PIC) containing at least integrase and the newly synthesized dsDNA copy of the retrotransposon must transit the nuclear membrane. Once in the nucleus, integrase performs the integration of the dsDNA into the host genome. The polypeptide is Transposon Ty2-DR2 Gag-Pol polyprotein (TY2B-DR2) (Saccharomyces cerevisiae (strain ATCC 204508 / S288c) (Baker's yeast)).